The following is a 314-amino-acid chain: Methionyl-tRNA formyltransferase (314 aa).

113–116 is a (6S)-5,6,7,8-tetrahydrofolate binding site; that stretch reads SLLP.

It belongs to the Fmt family.

The enzyme catalyses L-methionyl-tRNA(fMet) + (6R)-10-formyltetrahydrofolate = N-formyl-L-methionyl-tRNA(fMet) + (6S)-5,6,7,8-tetrahydrofolate + H(+). Functionally, attaches a formyl group to the free amino group of methionyl-tRNA(fMet). The formyl group appears to play a dual role in the initiator identity of N-formylmethionyl-tRNA by promoting its recognition by IF2 and preventing the misappropriation of this tRNA by the elongation apparatus. This Stutzerimonas stutzeri (strain A1501) (Pseudomonas stutzeri) protein is Methionyl-tRNA formyltransferase.